A 668-amino-acid polypeptide reads, in one-letter code: DNA mismatch repair protein MutL (668 aa).

A disordered region spans residues Thr437–Lys459. Residues Tyr438–Lys459 are compositionally biased toward polar residues.

Belongs to the DNA mismatch repair MutL/HexB family.

In terms of biological role, this protein is involved in the repair of mismatches in DNA. It is required for dam-dependent methyl-directed DNA mismatch repair. May act as a 'molecular matchmaker', a protein that promotes the formation of a stable complex between two or more DNA-binding proteins in an ATP-dependent manner without itself being part of a final effector complex. This is DNA mismatch repair protein MutL from Leuconostoc citreum (strain KM20).